Reading from the N-terminus, the 512-residue chain is ATP synthase subunit alpha 2 (512 aa).

Gly-169–Thr-176 is a binding site for ATP.

This sequence belongs to the ATPase alpha/beta chains family. F-type ATPases have 2 components, CF(1) - the catalytic core - and CF(0) - the membrane proton channel. CF(1) has five subunits: alpha(3), beta(3), gamma(1), delta(1), epsilon(1). CF(0) has three main subunits: a(1), b(2) and c(9-12). The alpha and beta chains form an alternating ring which encloses part of the gamma chain. CF(1) is attached to CF(0) by a central stalk formed by the gamma and epsilon chains, while a peripheral stalk is formed by the delta and b chains.

The protein resides in the cell inner membrane. The enzyme catalyses ATP + H2O + 4 H(+)(in) = ADP + phosphate + 5 H(+)(out). Produces ATP from ADP in the presence of a proton gradient across the membrane. The alpha chain is a regulatory subunit. This chain is ATP synthase subunit alpha 2, found in Vibrio campbellii (strain ATCC BAA-1116).